The primary structure comprises 96 residues: MKPYLLEHEELKELSAKIGGWRIMTNHIEREFNFSNFVEAFSFMTKIALICEKHNHHPNWENVYSKVIIKLSTHDLGGITNLDQTIASEINDIFEK.

Belongs to the pterin-4-alpha-carbinolamine dehydratase family.

The catalysed reaction is (4aS,6R)-4a-hydroxy-L-erythro-5,6,7,8-tetrahydrobiopterin = (6R)-L-erythro-6,7-dihydrobiopterin + H2O. In Prochlorococcus marinus subsp. pastoris (strain CCMP1986 / NIES-2087 / MED4), this protein is Putative pterin-4-alpha-carbinolamine dehydratase.